The chain runs to 298 residues: 4-hydroxy-tetrahydrodipicolinate synthase (298 aa).

Pyruvate is bound at residue T51. Y139 serves as the catalytic Proton donor/acceptor. Residue K167 is the Schiff-base intermediate with substrate of the active site. Residue I209 participates in pyruvate binding.

Belongs to the DapA family. Homotetramer; dimer of dimers.

Its subcellular location is the cytoplasm. The catalysed reaction is L-aspartate 4-semialdehyde + pyruvate = (2S,4S)-4-hydroxy-2,3,4,5-tetrahydrodipicolinate + H2O + H(+). It participates in amino-acid biosynthesis; L-lysine biosynthesis via DAP pathway; (S)-tetrahydrodipicolinate from L-aspartate: step 3/4. In terms of biological role, catalyzes the condensation of (S)-aspartate-beta-semialdehyde [(S)-ASA] and pyruvate to 4-hydroxy-tetrahydrodipicolinate (HTPA). This chain is 4-hydroxy-tetrahydrodipicolinate synthase, found in Haemophilus influenzae (strain 86-028NP).